The chain runs to 755 residues: Atypical kinase coq-8, mitochondrial (755 aa).

The interval 57–78 (QDVDPLKEPNKTNAPLLSPTLP) is disordered. The span at 67–78 (KTNAPLLSPTLP) shows a compositional bias: polar residues. Residues 435–443 (FACASIGQV) and lysine 457 each bind ATP. The active-site Proton acceptor is aspartate 587.

This sequence belongs to the protein kinase superfamily. ADCK protein kinase family.

The protein resides in the mitochondrion. Its pathway is cofactor biosynthesis; ubiquinone biosynthesis. Functionally, atypical kinase involved in the biosynthesis of coenzyme Q, also named ubiquinone, an essential lipid-soluble electron transporter for aerobic cellular respiration. Its substrate specificity is still unclear: may act as a protein kinase that mediates phosphorylation of coq-3. According to other reports, acts as a small molecule kinase, possibly a lipid kinase that phosphorylates a prenyl lipid in the ubiquinone biosynthesis pathway, as suggested by its ability to bind coenzyme Q lipid intermediates. This Caenorhabditis elegans protein is Atypical kinase coq-8, mitochondrial (coq-8).